The following is a 436-amino-acid chain: Glutamate-1-semialdehyde 2,1-aminomutase (436 aa).

Residue Lys-269 is modified to N6-(pyridoxal phosphate)lysine.

The protein belongs to the class-III pyridoxal-phosphate-dependent aminotransferase family. HemL subfamily. As to quaternary structure, homodimer. Pyridoxal 5'-phosphate serves as cofactor.

The protein localises to the cytoplasm. It carries out the reaction (S)-4-amino-5-oxopentanoate = 5-aminolevulinate. The protein operates within porphyrin-containing compound metabolism; protoporphyrin-IX biosynthesis; 5-aminolevulinate from L-glutamyl-tRNA(Glu): step 2/2. Its pathway is porphyrin-containing compound metabolism; chlorophyll biosynthesis. The chain is Glutamate-1-semialdehyde 2,1-aminomutase from Heliobacterium modesticaldum (strain ATCC 51547 / Ice1).